A 355-amino-acid polypeptide reads, in one-letter code: CX3C chemokine receptor 1 (355 aa).

Residues 1-31 lie on the Extracellular side of the membrane; it reads MDQFPESVTENFEYDDLAEACYIGDIVVFGT. A helical membrane pass occupies residues 32-59; sequence VFLSIFYSVIFAIGLVGNLLVVFALTNS. Residues 60-69 are Cytoplasmic-facing; the sequence is KKPKSVTDIY. A helical membrane pass occupies residues 70 to 90; the sequence is LLNLALSDLLFVATLPFWTHY. Residues 91-103 are Extracellular-facing; the sequence is LINEKGLHNAMCK. C102 and C175 form a disulfide bridge. A helical transmembrane segment spans residues 104–125; that stretch reads FTTAFFFIGFFGSIFFITVISI. At 126–142 the chain is on the cytoplasmic side; that stretch reads DRYLAIVLAANSMNNRT. A helical membrane pass occupies residues 143-167; that stretch reads VQHGVTISLGVWAAAILVAAPQFMF. Residues 168-195 are Extracellular-facing; that stretch reads TKQKENECLGDYPEVLQEIWPVLRNVET. A helical membrane pass occupies residues 196–215; sequence NFLGFLLPLLIMSYCYFRII. At 216–231 the chain is on the cytoplasmic side; it reads QTLFSCKNHKKAKAIK. A helical membrane pass occupies residues 232-256; that stretch reads LILLVVIVFFLFWTPYNVMIFLETL. Residues 257-273 lie on the Extracellular side of the membrane; sequence KLYDFFPSCDMRKDLRL. A helical transmembrane segment spans residues 274–297; the sequence is ALSVTETVAFSHCCLNPLIYAFAG. At 298 to 355 the chain is on the cytoplasmic side; sequence EKFRRYLYHLYGKCLAVLCGRSVHVDFSSSESQRSRHGSVLSSNFTYHTSDGDALLLL. Position 346 is a phosphothreonine (T346).

The protein belongs to the G-protein coupled receptor 1 family. As to quaternary structure, found in a ternary complex with CX3CL1 and ITGAV:ITGB3 or ITGA4:ITGB1. In terms of assembly, (Microbial infection) Interacts with human respiratory syncytial virus (HRSV) protein G; this interaction modulates host immune response. (Microbial infection) Interacts with HIV-1 envelope polyprotein gp160. Post-translationally, this protein is not N-glycosylated which is unusual for G-protein-coupled receptors. In terms of tissue distribution, expressed in lymphoid and neural tissues. Expressed in lymphocyte subsets, such as natural killer (NK) cells, gamma-delta T-cells and terminally differentiated CD8(+) T-cells. Expressed in smooth muscle cells in atherosclerotic plaques.

Its subcellular location is the cell membrane. In terms of biological role, receptor for the C-X3-C chemokine fractalkine (CX3CL1) present on many early leukocyte cells; CX3CR1-CX3CL1 signaling exerts distinct functions in different tissue compartments, such as immune response, inflammation, cell adhesion and chemotaxis. CX3CR1-CX3CL1 signaling mediates cell migratory functions. Responsible for the recruitment of natural killer (NK) cells to inflamed tissues. Acts as a regulator of inflammation process leading to atherogenesis by mediating macrophage and monocyte recruitment to inflamed atherosclerotic plaques, promoting cell survival. Involved in airway inflammation by promoting interleukin 2-producing T helper (Th2) cell survival in inflamed lung. Involved in the migration of circulating monocytes to non-inflamed tissues, where they differentiate into macrophages and dendritic cells. Acts as a negative regulator of angiogenesis, probably by promoting macrophage chemotaxis. Plays a key role in brain microglia by regulating inflammatory response in the central nervous system (CNS) and regulating synapse maturation. Required to restrain the microglial inflammatory response in the CNS and the resulting parenchymal damage in response to pathological stimuli. Involved in brain development by participating in synaptic pruning, a natural process during which brain microglia eliminates extra synapses during postnatal development. Synaptic pruning by microglia is required to promote the maturation of circuit connectivity during brain development. Acts as an important regulator of the gut microbiota by controlling immunity to intestinal bacteria and fungi. Expressed in lamina propria dendritic cells in the small intestine, which form transepithelial dendrites capable of taking up bacteria in order to provide defense against pathogenic bacteria. Required to initiate innate and adaptive immune responses against dissemination of commensal fungi (mycobiota) component of the gut: expressed in mononuclear phagocytes (MNPs) and acts by promoting induction of antifungal IgG antibodies response to confer protection against disseminated C.albicans or C.auris infection. Also acts as a receptor for C-C motif chemokine CCL26, inducing cell chemotaxis. Functionally, (Microbial infection) Acts as a coreceptor with CD4 for HIV-1 virus envelope protein. Its function is as follows. (Microbial infection) Acts as a coreceptor with CD4 for HIV-1 virus envelope protein. May have more potent HIV-1 coreceptothr activity than isoform 1. (Microbial infection) Acts as a coreceptor with CD4 for HIV-1 virus envelope protein. May have more potent HIV-1 coreceptor activity than isoform 1. The sequence is that of CX3C chemokine receptor 1 from Homo sapiens (Human).